Reading from the N-terminus, the 91-residue chain is Salivary lectin pathway inhibitor (91 aa).

An N-terminal signal peptide occupies residues 1 to 21 (MGLTETTLVLVSLAFFASAVA). Residues N26 and N87 are each glycosylated (N-linked (GlcNAc...) asparagine).

It belongs to the salp14 family. Post-translationally, glycosylated; deglycosylation largely abrogates the complement inhibitory effect. In terms of tissue distribution, nymph salivary gland (at protein level). Saliva (at protein level). Not detected in midgut.

The protein localises to the secreted. Functionally, inhibits the lectin pathway of complement system activation in the host by reducing binding of mannose-binding lectin and L-ficolin to their ligands. Does not affect the classical and alternative pathways of complement system activation in the host. Its function is as follows. (Microbial infection) Protects Borrelia garinii (strain A87S) from host complement-mediated killing by preventing deposition of host C5b-9 membrane attack complexes on the surface of spirochetes. Inhibits phagocytosis of B.garinii (strain A87S) by human neutrophils. Impairs Borrelia-induced complement-mediated chemotaxis of human polymorphonuclear leukocytes. In terms of biological role, (Microbial infection) Protects Borrelia burgdorferi (strain N40), which is resistant to normal human serum, from Borrelia-opsonizing antibody-mediated complement-dependent killing. The chain is Salivary lectin pathway inhibitor from Ixodes scapularis (Black-legged tick).